Consider the following 963-residue polypeptide: TBC1 domain family member 2B (963 aa).

The segment at 1–30 is disordered; it reads MPGAGARAEEGGGGGEGAAQGAAAEPGAGP. The span at 19–30 shows a compositional bias: low complexity; it reads AQGAAAEPGAGP. One can recognise a PH domain in the interval 34–139; that stretch reads PARLCGYLQK…WLQELQQKRW (106 aa). Phosphoserine is present on residues Ser155 and Ser317. Residues 272 to 348 are disordered; the sequence is EKKKLTPEGN…EMQLQVQSQQ (77 aa). Residues 318-348 show a composition bias toward low complexity; sequence GDPSSEGTSGSGSVSIRKPASEMQLQVQSQQ. The stretch at 337 to 535 forms a coiled coil; it reads ASEMQLQVQS…AKYSSLEAKL (199 aa). Residue Ser473 is modified to Phosphoserine. Residues 662–856 form the Rab-GAP TBC domain; the sequence is GIPHEHRSKV…KIWDSFLYEG (195 aa). Ser957 bears the Phosphoserine mark.

The protein resides in the early endosome. Its function is as follows. GTPase-activating protein that plays a role in the early steps of endocytosis. The protein is TBC1 domain family member 2B (TBC1D2B) of Homo sapiens (Human).